Reading from the N-terminus, the 301-residue chain is Large ribosomal subunit protein uL18 (301 aa).

The segment covering 257–271 (NPERVKSTKKNDKPK) has biased composition (basic and acidic residues). The segment at 257–283 (NPERVKSTKKNDKPKRDHKKFYPTKLT) is disordered.

The protein belongs to the universal ribosomal protein uL18 family. In terms of assembly, component of the large ribosomal subunit (LSU).

It is found in the cytoplasm. It localises to the nucleus. Functionally, component of the ribosome, a large ribonucleoprotein complex responsible for the synthesis of proteins in the cell. The small ribosomal subunit (SSU) binds messenger RNAs (mRNAs) and translates the encoded message by selecting cognate aminoacyl-transfer RNA (tRNA) molecules. The large subunit (LSU) contains the ribosomal catalytic site termed the peptidyl transferase center (PTC), which catalyzes the formation of peptide bonds, thereby polymerizing the amino acids delivered by tRNAs into a polypeptide chain. The nascent polypeptides leave the ribosome through a tunnel in the LSU and interact with protein factors that function in enzymatic processing, targeting, and the membrane insertion of nascent chains at the exit of the ribosomal tunnel. The chain is Large ribosomal subunit protein uL18 (RPL5) from Tetrahymena thermophila (strain SB210).